A 204-amino-acid polypeptide reads, in one-letter code: Superoxide dismutase [Mn] (204 aa).

H27 contributes to the Mn(2+) binding site. 2 positions are modified to phosphothreonine: T34 and T70. Residues H82, D164, and H168 each contribute to the Mn(2+) site.

Belongs to the iron/manganese superoxide dismutase family. In terms of assembly, homodimer. It depends on Mn(2+) as a cofactor.

The enzyme catalyses 2 superoxide + 2 H(+) = H2O2 + O2. Functionally, destroys superoxide anion radicals which are normally produced within the cells and which are toxic to biological systems. The polypeptide is Superoxide dismutase [Mn] (sodA) (Geobacillus stearothermophilus (Bacillus stearothermophilus)).